A 395-amino-acid polypeptide reads, in one-letter code: Multidrug resistance protein MdtL (395 aa).

The next 12 helical transmembrane spans lie at 4–24, 42–62, 69–89, 93–113, 131–151, 158–178, 217–237, 247–267, 271–291, 295–315, 328–350, and 355–377; these read FLLCSFALVLLYPAGIDMYLV, IAFSVYLAGMATAMLFAGKIA, PVAIVGALVFMTASLLCSRAS, LFLSGRFLQGVGAGGCYVVAF, LLNGITCIVPVLAPVMGHLIM, SLFYTMSAMGIIVGLLSLFIL, VSVILTFVNASPVLLMEVMGF, ALTAGVSMVVSFSTPFALGLF, TLMLVSQGLFLTAGVTLSLAH, VTLFGLTLICAGFSVGFGVAM, VASSTLGIAQVCGSSLWIWLAAI, and AMNMLIGILIGCSIVSILLIFSV.

This sequence belongs to the major facilitator superfamily. DHA1 family. MdtL (TC 2.A.1.2.22) subfamily.

The protein localises to the cell inner membrane. The chain is Multidrug resistance protein MdtL from Salmonella schwarzengrund (strain CVM19633).